Consider the following 510-residue polypeptide: Adenosine deaminase 2 (510 aa).

The first 24 residues, 1 to 24 (MSGWPVLPALLLAVAMSSFHSATS), serve as a signal peptide directing secretion. The dimerization stretch occupies residues 25-95 (RDEERNRLLM…GLMEKSAVFN (71 aa)). Residues His107 and His109 each contribute to the Zn(2+) site. Substrate is bound at residue Asp110. Residue Asn122 is glycosylated (N-linked (GlcNAc...) asparagine). The tract at residues 122-182 (NATYRPYCYF…TEFDNSLLRT (61 aa)) is PRB domain. A disulfide bridge links Cys132 with Cys156. An N-linked (GlcNAc...) asparagine glycan is attached at Asn171. Substrate is bound by residues 201-208 (WKKFKTIF), His290, and Gly323. His353 contributes to the Zn(2+) binding site. The active-site Proton donor is the Glu356. The N-linked (GlcNAc...) asparagine glycan is linked to Asn375. Residue His381 is the Proton acceptor of the active site. Asp438 is a Zn(2+) binding site. A substrate-binding site is contributed by Asp439.

The protein belongs to the metallo-dependent hydrolases superfamily. Adenosine and AMP deaminases family. ADGF subfamily. In terms of assembly, homodimer. Interacts with adenosine receptors. Binds heparin. Requires Zn(2+) as cofactor.

Its subcellular location is the secreted. The enzyme catalyses adenosine + H2O + H(+) = inosine + NH4(+). In terms of biological role, adenosine deaminase that may contribute to the degradation of extracellular adenosine, a signaling molecule that controls a variety of cellular responses. Requires elevated adenosine levels for optimal enzyme activity. Binds to cell surfaces via proteoglycans and may play a role in the regulation of cell proliferation and differentiation, independently of its enzyme activity. The sequence is that of Adenosine deaminase 2 from Sus scrofa (Pig).